Consider the following 146-residue polypeptide: Ribonuclease H (146 aa).

The RNase H type-1 domain maps to 1 to 142; the sequence is MNKIIIYTDG…ADALANLAMD (142 aa). The Mg(2+) site is built by aspartate 9, glutamate 47, aspartate 70, and aspartate 134.

This sequence belongs to the RNase H family. Monomer. Mg(2+) is required as a cofactor.

The protein resides in the cytoplasm. It carries out the reaction Endonucleolytic cleavage to 5'-phosphomonoester.. Endonuclease that specifically degrades the RNA of RNA-DNA hybrids. This is Ribonuclease H from Ruthia magnifica subsp. Calyptogena magnifica.